The primary structure comprises 140 residues: ATP synthase epsilon chain (140 aa).

It belongs to the ATPase epsilon chain family. F-type ATPases have 2 components, CF(1) - the catalytic core - and CF(0) - the membrane proton channel. CF(1) has five subunits: alpha(3), beta(3), gamma(1), delta(1), epsilon(1). CF(0) has three main subunits: a, b and c.

It is found in the cell inner membrane. In terms of biological role, produces ATP from ADP in the presence of a proton gradient across the membrane. The chain is ATP synthase epsilon chain from Saccharophagus degradans (strain 2-40 / ATCC 43961 / DSM 17024).